Consider the following 457-residue polypeptide: Cyanidin 3-O-galactoside 2''-O-xylosyltransferase FGGT1 (457 aa).

This sequence belongs to the UDP-glycosyltransferase family. As to expression, expressed in ovaries.

It catalyses the reaction cyanidin 3-O-beta-D-galactoside + UDP-alpha-D-xylose = cyanidin 3-O-[beta-D-xylosyl-(1-&gt;2)-beta-D-galactoside] + UDP + H(+). It functions in the pathway pigment biosynthesis; anthocyanin biosynthesis. Its function is as follows. Xylosyltransferase involved in anthocyanin biosynthesis by catalyzing the xylosylation of cyanidin 3-O-galactoside to form cyanidin 3-O-[2-O-(-xylosyl)-galactoside]. Required for the accumulation of anthocyanin in red-fleshed kiwifruit varieties. The chain is Cyanidin 3-O-galactoside 2''-O-xylosyltransferase FGGT1 from Actinidia chinensis var. chinensis (Chinese soft-hair kiwi).